The primary structure comprises 503 residues: Maturase K (503 aa).

It belongs to the intron maturase 2 family. MatK subfamily.

It is found in the plastid. It localises to the chloroplast. Functionally, usually encoded in the trnK tRNA gene intron. Probably assists in splicing its own and other chloroplast group II introns. The sequence is that of Maturase K from Rosa gigantea (Giant tea rose).